We begin with the raw amino-acid sequence, 202 residues long: LexA repressor (202 aa).

The segment at residues 28 to 48 (RAEIAQRLGFRSPNAAEEHLK) is a DNA-binding region (H-T-H motif). Catalysis depends on for autocatalytic cleavage activity residues Ser119 and Lys156.

The protein belongs to the peptidase S24 family. Homodimer.

It catalyses the reaction Hydrolysis of Ala-|-Gly bond in repressor LexA.. In terms of biological role, represses a number of genes involved in the response to DNA damage (SOS response), including recA and lexA. Binds to the 16 bp palindromic sequence 5'-CTGTATATATATACAG-3'. In the presence of single-stranded DNA, RecA interacts with LexA causing an autocatalytic cleavage which disrupts the DNA-binding part of LexA, leading to derepression of the SOS regulon and eventually DNA repair. This Salmonella agona (strain SL483) protein is LexA repressor.